Here is a 406-residue protein sequence, read N- to C-terminus: GTPase Obg (406 aa).

An Obg domain is found at 1-159 (MKFVDEVSIH…RDLKLELKVL (159 aa)). A disordered region spans residues 127–148 (NTRFKSSTNRAPRQTTPGKPGE). The segment covering 129-143 (RFKSSTNRAPRQTTP) has biased composition (polar residues). Residues 160–334 (ADVGLLGLPN…LSQDIMRYLD (175 aa)) form the OBG-type G domain. Residues 166-173 (GLPNAGKS), 191-195 (FTTLV), 213-216 (DIPG), 283-286 (NKMD), and 315-317 (SAL) each bind GTP. Ser-173 and Thr-193 together coordinate Mg(2+). The disordered stretch occupies residues 382-406 (AGAVDDDDFDDEEDDGDGPEIFYVP). The segment covering 385-399 (VDDDDFDDEEDDGDG) has biased composition (acidic residues).

It belongs to the TRAFAC class OBG-HflX-like GTPase superfamily. OBG GTPase family. Monomer. The cofactor is Mg(2+).

The protein localises to the cytoplasm. An essential GTPase which binds GTP, GDP and possibly (p)ppGpp with moderate affinity, with high nucleotide exchange rates and a fairly low GTP hydrolysis rate. Plays a role in control of the cell cycle, stress response, ribosome biogenesis and in those bacteria that undergo differentiation, in morphogenesis control. This chain is GTPase Obg, found in Pseudomonas aeruginosa (strain LESB58).